The sequence spans 192 residues: Thymidylate kinase (192 aa).

ATP is bound at residue 7–14 (GIDCVGKS).

Belongs to the thymidylate kinase family.

It carries out the reaction dTMP + ATP = dTDP + ADP. Its function is as follows. Phosphorylation of dTMP to form dTDP in both de novo and salvage pathways of dTTP synthesis. The chain is Thymidylate kinase from Campylobacter jejuni subsp. doylei (strain ATCC BAA-1458 / RM4099 / 269.97).